The sequence spans 175 residues: Regenerating islet-derived protein 3-alpha (175 aa).

The N-terminal stretch at 1-26 (MLPHLVLNSISWMLLSCLLFVFQVQG) is a signal peptide. A propeptide spanning residues 27 to 37 (EDFQKEVPSPR) is cleaved from the precursor. Cystine bridges form between Cys-40–Cys-51, Cys-68–Cys-171, and Cys-146–Cys-163. One can recognise a C-type lectin domain in the interval 47-172 (YRSHCYALVM…CDGTLPFVCK (126 aa)). The Zn(2+) site is built by His-50, His-107, Glu-121, and His-145. Residues 103–118 (WIGLHDPTMGQQPNGG) form a sufficient to activate EXTL3 region.

As to quaternary structure, forms a hexameric membrane-permeabilizing oligomeric pore on membrane phospholipids. The hexamer is formed by three dimers related by helical symmetry. Forms filaments, filamentation traps pore complexes and limits damage to host cells. Interacts with EXTL3. Proteolytic processing by trypsin removes an inhibitory N-terminal propeptide and is essential for peptidoglycan binding and antibacterial activity. Small intestine and pancreas.

The protein localises to the secreted. In terms of biological role, bactericidal C-type lectin. The lack of the EPN motif may explain its inability to bind peptidoglycan. Its function is as follows. Acts as a hormone in response to different stimuli like anti-inflammatory signals, such as IL17A, or gut microbiome. Secreted by different cell types to activate its receptor EXTL3 and induce cell specific signaling pathways. Induced by IL17A in keratinocytes, regulates keratinocyte proliferation and differentiation after skin injury via activation of EXTL3-PI3K-AKT signaling pathway. In parallel, inhibits skin inflammation through the inhibition of inflammatory cytokines such as IL6 and TNF. In pancreas, is able to permealize beta-cells membrane and stimulate their proliferation. This Mus musculus (Mouse) protein is Regenerating islet-derived protein 3-alpha (Reg3a).